We begin with the raw amino-acid sequence, 545 residues long: Membrane protein insertase YidC (545 aa).

The next 6 helical transmembrane spans lie at 10 to 30 (AVYL…FLFS), 319 to 339 (LLYF…NVIP), 341 to 361 (WGLS…PLTF), 407 to 427 (IGGC…YGLV), 467 to 487 (ILPF…SNVS), and 502 to 522 (MPIM…IYWI).

This sequence belongs to the OXA1/ALB3/YidC family. Type 1 subfamily. Interacts with the Sec translocase complex via SecD. Specifically interacts with transmembrane segments of nascent integral membrane proteins during membrane integration.

Its subcellular location is the cell inner membrane. Functionally, required for the insertion and/or proper folding and/or complex formation of integral membrane proteins into the membrane. Involved in integration of membrane proteins that insert both dependently and independently of the Sec translocase complex, as well as at least some lipoproteins. Aids folding of multispanning membrane proteins. The chain is Membrane protein insertase YidC from Borrelia recurrentis (strain A1).